Here is a 234-residue protein sequence, read N- to C-terminus: Myelin protein zero-like protein 3 (234 aa).

An N-terminal signal peptide occupies residues 1-31 (MQQSGVPGSRGCALCPLLGVLFFQGVYVIFS). The region spanning 32–148 (LEIKADAHVR…NIPATELTVT (117 aa)) is the Ig-like V-type domain. Residues 32–158 (LEIKADAHVR…ERGFGTMLSS (127 aa)) lie on the Extracellular side of the membrane. The cysteines at positions 52 and 128 are disulfide-linked. Residue N123 is glycosylated (N-linked (GlcNAc...) asparagine). Residues 159-179 (VALLSILVFIPSTVVVILLLV) traverse the membrane as a helical segment. Residues 180-234 (RMGRKSAGLKKRSKSGYKKSSIEVSDDTDQEGDDCMAKLCVRCAECVDSDYEETY) are Cytoplasmic-facing.

It belongs to the myelin P0 protein family.

Its subcellular location is the membrane. In terms of biological role, mediates homophilic cell-cell adhesion. The sequence is that of Myelin protein zero-like protein 3 (MPZL3) from Bos taurus (Bovine).